The chain runs to 498 residues: ATP synthase subunit beta, chloroplastic (498 aa).

172–179 is an ATP binding site; sequence GGAGVGKT.

The protein belongs to the ATPase alpha/beta chains family. As to quaternary structure, F-type ATPases have 2 components, CF(1) - the catalytic core - and CF(0) - the membrane proton channel. CF(1) has five subunits: alpha(3), beta(3), gamma(1), delta(1), epsilon(1). CF(0) has four main subunits: a(1), b(1), b'(1) and c(9-12).

The protein localises to the plastid. The protein resides in the chloroplast thylakoid membrane. The catalysed reaction is ATP + H2O + 4 H(+)(in) = ADP + phosphate + 5 H(+)(out). Its function is as follows. Produces ATP from ADP in the presence of a proton gradient across the membrane. The catalytic sites are hosted primarily by the beta subunits. In Montinia caryophyllacea (Wild clove bush), this protein is ATP synthase subunit beta, chloroplastic.